Here is a 569-residue protein sequence, read N- to C-terminus: Alpha-amylase (569 aa).

A signal peptide spans 1-28 (MARKTVAAALALVAGAAVAVTGNAPAQA). Residues N120, Q166, and D175 each coordinate Ca(2+). D205 serves as the catalytic Nucleophile. H209 lines the Ca(2+) pocket. Residue E232 is the Proton donor of the active site. The region spanning 468-569 (TTPPATSGAS…QLVLNDTFRS (102 aa)) is the CBM20 domain.

The protein belongs to the glycosyl hydrolase 13 family. Monomer. The cofactor is Ca(2+).

It catalyses the reaction Endohydrolysis of (1-&gt;4)-alpha-D-glucosidic linkages in polysaccharides containing three or more (1-&gt;4)-alpha-linked D-glucose units.. In Streptomyces violaceus (Streptomyces venezuelae), this protein is Alpha-amylase (aml).